A 207-amino-acid chain; its full sequence is uncharacterized protein (207 aa).

S-adenosyl-L-methionine-binding residues include G51 and D72.

It belongs to the methyltransferase superfamily. YrrT family.

In terms of biological role, could be a S-adenosyl-L-methionine-dependent methyltransferase. This is an uncharacterized protein from Staphylococcus carnosus (strain TM300).